A 357-amino-acid polypeptide reads, in one-letter code: Glycerol-3-phosphate dehydrogenase [NAD(P)+] (357 aa).

NADPH-binding residues include Ser-12, Trp-13, His-33, and Lys-115. Residues Lys-115, Gly-149, and Ser-151 each contribute to the sn-glycerol 3-phosphate site. Residue Gly-153 participates in NADPH binding. Sn-glycerol 3-phosphate-binding residues include Lys-204, Asp-263, Arg-274, and Asn-275. The active-site Proton acceptor is Lys-204. Arg-274 provides a ligand contact to NADPH. NADPH contacts are provided by Leu-307 and Glu-309.

This sequence belongs to the NAD-dependent glycerol-3-phosphate dehydrogenase family.

It localises to the cytoplasm. It carries out the reaction sn-glycerol 3-phosphate + NAD(+) = dihydroxyacetone phosphate + NADH + H(+). The catalysed reaction is sn-glycerol 3-phosphate + NADP(+) = dihydroxyacetone phosphate + NADPH + H(+). The protein operates within membrane lipid metabolism; glycerophospholipid metabolism. In terms of biological role, catalyzes the reduction of the glycolytic intermediate dihydroxyacetone phosphate (DHAP) to sn-glycerol 3-phosphate (G3P), the key precursor for phospholipid synthesis. The sequence is that of Glycerol-3-phosphate dehydrogenase [NAD(P)+] from Treponema denticola (strain ATCC 35405 / DSM 14222 / CIP 103919 / JCM 8153 / KCTC 15104).